The following is a 356-amino-acid chain: Transcription factor ATOH1 (356 aa).

Residues 1–21 show a composition bias toward basic and acidic residues; the sequence is MSRLLHAEEWAEVKELGDHHR. Disordered regions lie at residues 1–56 and 92–125; these read MSRL…PELS and SEAAAPRDEVDGRGELVRRSSGGASSSKSPGPVK. Pro residues predominate over residues 26–40; it reads HHLPQPPPPPPPQPP. Positions 96–109 are enriched in basic and acidic residues; that stretch reads APRDEVDGRGELVR. Residues 110 to 124 show a composition bias toward low complexity; the sequence is RSSGGASSSKSPGPV. In terms of domain architecture, bHLH spans 161-213; that stretch reads QRRLAANARERRRMHGLNHAFDQLRNVIPSFNNDKKLSKYETLQMAQIYINAL. Disordered regions lie at residues 218 to 279 and 314 to 356; these read QTPS…TRFS and SPSL…DEAS. Residues 252–266 are compositionally biased toward low complexity; sequence NATAAGAQQASGGSQ. Basic and acidic residues predominate over residues 337 to 356; sequence HRSDGEFSPHSHYSDSDEAS.

Efficient DNA binding requires dimerization with another bHLH protein.

Its subcellular location is the nucleus. Its function is as follows. Transcriptional regulator. Activates E box-dependent transcription in collaboration with TCF3/E47, but the activity is completely antagonized by the negative regulator of neurogenesis HES1. Plays a role in the differentiation of subsets of neural cells by activating E box-dependent transcription. The polypeptide is Transcription factor ATOH1 (Pan troglodytes (Chimpanzee)).